Consider the following 403-residue polypeptide: S-adenosylmethionine synthase (403 aa).

Residue His-15 participates in ATP binding. Residue Asp-17 coordinates Mg(2+). Position 43 (Glu-43) interacts with K(+). Positions 56 and 99 each coordinate L-methionine. The flexible loop stretch occupies residues 99–109; that stretch reads QSPHIAQGVDR. ATP-binding positions include 166–168, 232–233, Asp-241, 247–248, Ala-264, and Lys-268; these read DAK, KF, and RK. Asp-241 contacts L-methionine. Lys-272 contributes to the L-methionine binding site.

It belongs to the AdoMet synthase family. In terms of assembly, homotetramer; dimer of dimers. Mg(2+) serves as cofactor. It depends on K(+) as a cofactor.

It is found in the cytoplasm. The catalysed reaction is L-methionine + ATP + H2O = S-adenosyl-L-methionine + phosphate + diphosphate. It functions in the pathway amino-acid biosynthesis; S-adenosyl-L-methionine biosynthesis; S-adenosyl-L-methionine from L-methionine: step 1/1. Its function is as follows. Catalyzes the formation of S-adenosylmethionine (AdoMet) from methionine and ATP. The overall synthetic reaction is composed of two sequential steps, AdoMet formation and the subsequent tripolyphosphate hydrolysis which occurs prior to release of AdoMet from the enzyme. The chain is S-adenosylmethionine synthase from Stenotrophomonas maltophilia (strain R551-3).